A 358-amino-acid polypeptide reads, in one-letter code: Phospho-N-acetylmuramoyl-pentapeptide-transferase (358 aa).

10 consecutive transmembrane segments (helical) span residues 24-44 (FRSI…GPWV), 73-93 (TMGG…WADL), 95-115 (NVFI…GFVD), 134-154 (MFWQ…LPGF), 169-189 (ELGI…SNAV), 197-217 (GLAI…CYIA), 233-253 (GAGE…GFLW), 261-281 (VFMG…LAVL), 286-306 (ILLV…IFQV), and 335-355 (KIIV…ISTL).

Belongs to the glycosyltransferase 4 family. MraY subfamily. The cofactor is Mg(2+).

It localises to the cell inner membrane. It catalyses the reaction UDP-N-acetyl-alpha-D-muramoyl-L-alanyl-gamma-D-glutamyl-meso-2,6-diaminopimeloyl-D-alanyl-D-alanine + di-trans,octa-cis-undecaprenyl phosphate = di-trans,octa-cis-undecaprenyl diphospho-N-acetyl-alpha-D-muramoyl-L-alanyl-D-glutamyl-meso-2,6-diaminopimeloyl-D-alanyl-D-alanine + UMP. Its pathway is cell wall biogenesis; peptidoglycan biosynthesis. Catalyzes the initial step of the lipid cycle reactions in the biosynthesis of the cell wall peptidoglycan: transfers peptidoglycan precursor phospho-MurNAc-pentapeptide from UDP-MurNAc-pentapeptide onto the lipid carrier undecaprenyl phosphate, yielding undecaprenyl-pyrophosphoryl-MurNAc-pentapeptide, known as lipid I. The chain is Phospho-N-acetylmuramoyl-pentapeptide-transferase from Geobacter sp. (strain M21).